A 342-amino-acid chain; its full sequence is Deoxyguanosinetriphosphate triphosphohydrolase-like protein (342 aa).

Residues 75 to 190 (RLVHTLEVSQ…VRFADKIAYV (116 aa)) form the HD domain.

Belongs to the dGTPase family. Type 2 subfamily.

This is Deoxyguanosinetriphosphate triphosphohydrolase-like protein from Clostridium perfringens (strain 13 / Type A).